Consider the following 307-residue polypeptide: Glycine--tRNA ligase alpha subunit (307 aa).

Belongs to the class-II aminoacyl-tRNA synthetase family. In terms of assembly, tetramer of two alpha and two beta subunits.

The protein localises to the cytoplasm. The catalysed reaction is tRNA(Gly) + glycine + ATP = glycyl-tRNA(Gly) + AMP + diphosphate. This chain is Glycine--tRNA ligase alpha subunit, found in Aeromonas salmonicida (strain A449).